The following is a 264-amino-acid chain: uncharacterized protein (264 aa).

The disordered stretch occupies residues 1-20 (MENIEKKCQPETINEDNNDE).

Belongs to the mimivirus R73/L269/L862 family.

This is an uncharacterized protein from Acanthamoeba polyphaga mimivirus (APMV).